Here is a 276-residue protein sequence, read N- to C-terminus: Elongation factor Ts (276 aa).

Residues 76 to 79 (TDFV) form an involved in Mg(2+) ion dislocation from EF-Tu region.

The protein belongs to the EF-Ts family.

The protein resides in the cytoplasm. Functionally, associates with the EF-Tu.GDP complex and induces the exchange of GDP to GTP. It remains bound to the aminoacyl-tRNA.EF-Tu.GTP complex up to the GTP hydrolysis stage on the ribosome. The sequence is that of Elongation factor Ts from Mycobacterium leprae (strain Br4923).